Here is a 71-residue protein sequence, read N- to C-terminus: DNA-directed RNA polymerase subunit omega (71 aa).

It belongs to the RNA polymerase subunit omega family. In terms of assembly, the RNAP catalytic core consists of 2 alpha, 1 beta, 1 beta' and 1 omega subunit. When a sigma factor is associated with the core the holoenzyme is formed, which can initiate transcription.

The enzyme catalyses RNA(n) + a ribonucleoside 5'-triphosphate = RNA(n+1) + diphosphate. In terms of biological role, promotes RNA polymerase assembly. Latches the N- and C-terminal regions of the beta' subunit thereby facilitating its interaction with the beta and alpha subunits. This chain is DNA-directed RNA polymerase subunit omega, found in Aromatoleum aromaticum (strain DSM 19018 / LMG 30748 / EbN1) (Azoarcus sp. (strain EbN1)).